A 211-amino-acid chain; its full sequence is uncharacterized protein (211 aa).

This is an uncharacterized protein from Treponema pallidum (strain Nichols).